We begin with the raw amino-acid sequence, 412 residues long: MKAARFVMRSASSLGNAGLVPREVELFSRYSPSPLSMKQLLDFGSENACERTSFSFLRQELPVRLANILKEIDILPEHLVNTPSVQLVKSWYIQSLMDLVEFHEKSPEDQKVLSDFVDTLVKVRNRHHNVVPTMAQGILEYKDNCTVDPVTNQNLQYFLDRFYMNRISTRMLMNQHILIFSDSKTGNPSHIGSIDPNCDVVAVVEDAFECAKMLCDQYYLTSPELKLTQVNGKFPGQPIHIVYVPSHLHHMLFELFKNAMRATVEHQENRPFLTPVEATVVLGKEDLTIKISDRGGGVPLRITDRLFSYTYSTAPTPVMDNSRNAPLAGFGYGLPISRLYAKYFQGDLNLYSMSGYGTDAIIYLKALSSESIEKLPVFNKSAFKHYQMSSEADDWCIPSKEPKNLSKEKLAV.

The Histidine kinase domain maps to 138–368 (ILEYKDNCTV…DAIIYLKALS (231 aa)). Residues 254–261 (ELFKNAMR), D293, 312–313 (ST), and 329–334 (GFGYGL) contribute to the ATP site.

Belongs to the PDK/BCKDK protein kinase family. As to quaternary structure, homodimer. Interacts with the pyruvate dehydrogenase complex subunit DLAT, and is part of the multimeric pyruvate dehydrogenase complex that contains multiple copies of pyruvate dehydrogenase (E1), dihydrolipoamide acetyltransferase (DLAT, E2) and lipoamide dehydrogenase (DLD, E3). In terms of tissue distribution, ubiquitous; highest levels of expression in heart and skeletal muscle.

It is found in the mitochondrion matrix. It carries out the reaction L-seryl-[pyruvate dehydrogenase E1 alpha subunit] + ATP = O-phospho-L-seryl-[pyruvate dehydrogenase E1 alpha subunit] + ADP + H(+). Kinase that plays a key role in regulation of glucose and fatty acid metabolism and homeostasis via phosphorylation of the pyruvate dehydrogenase subunits PDHA1 and PDHA2. This inhibits pyruvate dehydrogenase activity, and thereby regulates metabolite flux through the tricarboxylic acid cycle, down-regulates aerobic respiration and inhibits the formation of acetyl-coenzyme A from pyruvate. Inhibition of pyruvate dehydrogenase decreases glucose utilization and increases fat metabolism in response to prolonged fasting and starvation. Plays an important role in maintaining normal blood glucose levels under starvation, and is involved in the insulin signaling cascade. Via its regulation of pyruvate dehydrogenase activity, plays an important role in maintaining normal blood pH and in preventing the accumulation of ketone bodies under starvation. In the fed state, mediates cellular responses to glucose levels and to a high-fat diet. Regulates both fatty acid oxidation and de novo fatty acid biosynthesis. Plays a role in the generation of reactive oxygen species. Protects detached epithelial cells against anoikis. Plays a role in cell proliferation via its role in regulating carbohydrate and fatty acid metabolism. This Rattus norvegicus (Rat) protein is [Pyruvate dehydrogenase (acetyl-transferring)] kinase isozyme 4, mitochondrial (Pdk4).